A 3255-amino-acid chain; its full sequence is Genome polyprotein (3255 aa).

Residues 292–437 enclose the Peptidase S30 domain; that stretch reads VMNQQTLTAL…HTLTHRMVQY (146 aa). Residues H345, D354, and S388 each act as for P1 proteinase activity in the active site. Positions 489–492 match the Involved in interaction with stylet and aphid transmission motif; it reads KITC. The Involved in virions binding and aphid transmission motif lies at 747-749; the sequence is PTK. Residues 773 to 895 enclose the Peptidase C6 domain; that stretch reads MFVAKDGYCY…ESEMQHYRVG (123 aa). Active-site for helper component proteinase activity residues include C781 and H854. Residues 1397 to 1549 form the Helicase ATP-binding domain; that stretch reads EIAHNEYRDI…PMHMVDITTE (153 aa). Residue 1410-1417 participates in ATP binding; that stretch reads GGVGSGKS. The DECH box signature appears at 1499–1502; it reads DECH. The region spanning 1568 to 1727 is the Helicase C-terminal domain; the sequence is DATKKGDNIL…GLPVMTSNVS (160 aa). Residues 2062–2069 carry the Nuclear localization signal motif; that stretch reads EKGKKSGK. Position 2084 is an O-(5'-phospho-RNA)-tyrosine (Y2084). The Peptidase C4 domain occupies 2215 to 2433; the sequence is SKTLFRGLRD…MVWGGINLIN (219 aa). Active-site for nuclear inclusion protein A activity residues include H2260, D2295, and C2365. The 125-residue stretch at 2699 to 2823 folds into the RdRp catalytic domain; it reads WVYCDADGSQ…AIKPEYESLL (125 aa). The segment at 2980–3027 is disordered; that stretch reads TKLDAGQGSKNDDKQKSSADSKDNVITEKGSGSGQVRKDDDINAGLHG. Residues 2989–3005 are compositionally biased toward basic and acidic residues; sequence KNDDKQKSSADSKDNVI.

This sequence belongs to the potyviridae genome polyprotein family. In terms of assembly, interacts with host eIF4E protein (via cap-binding region); this interaction mediates the translation of the VPg-viral RNA conjugates. Part of a complex that comprises VPg, RNA, host EIF4E and EIF4G; this interaction mediates the translation of the VPg-viral RNA conjugates. Post-translationally, VPg is uridylylated by the polymerase and is covalently attached to the 5'-end of the genomic RNA. This uridylylated form acts as a nucleotide-peptide primer for the polymerase. Potyviral RNA is expressed as two polyproteins which undergo post-translational proteolytic processing. Genome polyprotein is processed by NIa-pro, P1 and HC-pro proteinases resulting in the production of at least ten individual proteins. P3N-PIPO polyprotein is cleaved by P1 and HC-pro proteinases resulting in the production of three individual proteins. The P1 proteinase and the HC-pro cleave only their respective C-termini autocatalytically. 6K1 is essential for proper proteolytic separation of P3 from CI.

Its subcellular location is the host cytoplasmic vesicle. The protein resides in the host nucleus. It localises to the virion. It carries out the reaction RNA(n) + a ribonucleoside 5'-triphosphate = RNA(n+1) + diphosphate. It catalyses the reaction Hydrolyzes glutaminyl bonds, and activity is further restricted by preferences for the amino acids in P6 - P1' that vary with the species of potyvirus, e.g. Glu-Xaa-Xaa-Tyr-Xaa-Gln-|-(Ser or Gly) for the enzyme from tobacco etch virus. The natural substrate is the viral polyprotein, but other proteins and oligopeptides containing the appropriate consensus sequence are also cleaved.. The enzyme catalyses Hydrolyzes a Gly-|-Gly bond at its own C-terminus, commonly in the sequence -Tyr-Xaa-Val-Gly-|-Gly, in the processing of the potyviral polyprotein.. Required for aphid transmission and also has proteolytic activity. Only cleaves a Gly-Gly dipeptide at its own C-terminus. Interacts with virions and aphid stylets. Acts as a suppressor of RNA-mediated gene silencing, also known as post-transcriptional gene silencing (PTGS), a mechanism of plant viral defense that limits the accumulation of viral RNAs. May have RNA-binding activity. In terms of biological role, has helicase activity. It may be involved in replication. Its function is as follows. Indispensable for virus replication. Functionally, mediates the cap-independent, EIF4E-dependent translation of viral genomic RNAs. Binds to the cap-binding site of host EIF4E and thus interferes with the host EIF4E-dependent mRNA export and translation. VPg-RNA directly binds EIF4E and is a template for transcription. Also forms trimeric complexes with EIF4E-EIF4G, which are templates for translation. Has RNA-binding and proteolytic activities. In terms of biological role, an RNA-dependent RNA polymerase that plays an essential role in the virus replication. Its function is as follows. Involved in aphid transmission, cell-to-cell and systemis movement, encapsidation of the viral RNA and in the regulation of viral RNA amplification. The protein is Genome polyprotein of Lettuce mosaic virus (strain E) (LMV).